The following is a 103-amino-acid chain: Large ribosomal subunit protein bL21 (103 aa).

This sequence belongs to the bacterial ribosomal protein bL21 family. As to quaternary structure, part of the 50S ribosomal subunit. Contacts protein L20.

In terms of biological role, this protein binds to 23S rRNA in the presence of protein L20. In Klebsiella pneumoniae (strain 342), this protein is Large ribosomal subunit protein bL21.